Reading from the N-terminus, the 245-residue chain is Small ribosomal subunit protein uS2 (245 aa).

The protein belongs to the universal ribosomal protein uS2 family.

In Dehalococcoides mccartyi (strain CBDB1), this protein is Small ribosomal subunit protein uS2.